Here is a 351-residue protein sequence, read N- to C-terminus: Phosphoribosylformylglycinamidine cyclo-ligase (351 aa).

This sequence belongs to the AIR synthase family.

Its subcellular location is the cytoplasm. It carries out the reaction 2-formamido-N(1)-(5-O-phospho-beta-D-ribosyl)acetamidine + ATP = 5-amino-1-(5-phospho-beta-D-ribosyl)imidazole + ADP + phosphate + H(+). It functions in the pathway purine metabolism; IMP biosynthesis via de novo pathway; 5-amino-1-(5-phospho-D-ribosyl)imidazole from N(2)-formyl-N(1)-(5-phospho-D-ribosyl)glycinamide: step 2/2. This is Phosphoribosylformylglycinamidine cyclo-ligase from Burkholderia vietnamiensis (strain G4 / LMG 22486) (Burkholderia cepacia (strain R1808)).